Consider the following 295-residue polypeptide: ATP synthase gamma chain (295 aa).

The protein belongs to the ATPase gamma chain family. F-type ATPases have 2 components, CF(1) - the catalytic core - and CF(0) - the membrane proton channel. CF(1) has five subunits: alpha(3), beta(3), gamma(1), delta(1), epsilon(1). CF(0) has three main subunits: a, b and c.

The protein resides in the cell membrane. Its function is as follows. Produces ATP from ADP in the presence of a proton gradient across the membrane. The gamma chain is believed to be important in regulating ATPase activity and the flow of protons through the CF(0) complex. The protein is ATP synthase gamma chain of Herpetosiphon aurantiacus (strain ATCC 23779 / DSM 785 / 114-95).